The sequence spans 347 residues: Chlorophyllase type 0 (347 aa).

Positions 1–19 (MAKLLLLIFGVFIFVNSQA) are cleaved as a signal peptide. Residues 20 to 30 (QTFPTILEKHN) constitute a propeptide that is removed on maturation. Residues 160–164 (GHSRG) carry the GXSXG motif. Catalysis depends on Ser-162, which acts as the Nucleophile. Asp-191 (charge relay system) is an active-site residue. 3 N-linked (GlcNAc...) asparagine glycosylation sites follow: Asn-215, Asn-229, and Asn-251. Residue His-262 is the Charge relay system of the active site. N-linked (GlcNAc...) asparagine glycosylation is present at Asn-321.

This sequence belongs to the AB hydrolase superfamily. Lipase family.

It carries out the reaction a chlorophyll + H2O = a chlorophyllide + phytol + H(+). The enzyme catalyses chlorophyll a + H2O = phytol + chlorophyllide a + H(+). The protein operates within porphyrin-containing compound metabolism; chlorophyll degradation. Inhibited by diisopropyl fluorophosphate (DFP), phenylmethanesulfonyl fluoride (PMSF) or p-chloromercuribenzoic acid (PCMB), but not by N-ethylmaleimide (NEM) or iodoacetamide. In terms of biological role, catalyzes the hydrolysis of ester bond in chlorophyll to yield chlorophyllide and phytol. The chain is Chlorophyllase type 0 from Chenopodium album (Fat hen).